Reading from the N-terminus, the 174-residue chain is 5-hydroxymethyl-dUMP N-hydrolase (174 aa).

Alanine 2 carries the post-translational modification N-acetylalanine. Glycine 27 contacts 5-hydroxymethyl-dUMP. At serine 28 the chain carries Phosphoserine. Residues isoleucine 29, arginine 30, glycine 31, serine 98, glycine 100, and glutamate 104 each coordinate 5-hydroxymethyl-dUMP. Phosphoserine is present on serine 98. Residues serine 123, serine 128, serine 138, and serine 169 each carry the phosphoserine modification. Residue serine 128 participates in 5-hydroxymethyl-dUMP binding.

Belongs to the 2'-deoxynucleoside 5'-phosphate N-hydrolase 1 family. As to quaternary structure, monomer and homodimer. In terms of tissue distribution, expressed at low levels in brain, colon, lung, peripheral blood leukocytes, placenta, small intestine, and thymus. Expressed at high levels in heart, kidney, liver, skeletal muscle and spleen. Overexpressed in a significant proportion of breast cancers.

The protein resides in the cytoplasm. The protein localises to the nucleus. The enzyme catalyses 5-hydroxymethyl-dUMP + H2O = 5-hydroxymethyluracil + 2-deoxy-D-ribose 5-phosphate. Its activity is regulated as follows. Inhibited by AMP and GMP. In terms of biological role, part of a nucleotide salvage pathway that eliminates epigenetically modified 5-hydroxymethyl-dCMP (hmdCMP) in a two-step process entailing deamination to cytotoxic 5-hydroxymethyl-dUMP (hmdUMP), followed by its hydrolysis into 5-hydroxymethyluracil (hmU) and 2-deoxy-D-ribose 5-phosphate (deoxyribosephosphate). Catalyzes the second step in that pathway, the hydrolysis of the N-glycosidic bond in hmdUMP, degrading this cytotoxic nucleotide to avoid its genomic integration. The sequence is that of 5-hydroxymethyl-dUMP N-hydrolase from Homo sapiens (Human).